A 158-amino-acid polypeptide reads, in one-letter code: 2-C-methyl-D-erythritol 2,4-cyclodiphosphate synthase (158 aa).

Positions 9 and 11 each coordinate a divalent metal cation. 4-CDP-2-C-methyl-D-erythritol 2-phosphate-binding positions include 9–11 (DVH) and 35–36 (HS). Residue His43 coordinates a divalent metal cation. 4-CDP-2-C-methyl-D-erythritol 2-phosphate contacts are provided by residues 57-59 (DIG), 62-66 (FPDTD), 101-107 (AQKPKMA), 133-136 (TTTE), Phe140, and Arg143.

This sequence belongs to the IspF family. In terms of assembly, homotrimer. The cofactor is a divalent metal cation.

It catalyses the reaction 4-CDP-2-C-methyl-D-erythritol 2-phosphate = 2-C-methyl-D-erythritol 2,4-cyclic diphosphate + CMP. The protein operates within isoprenoid biosynthesis; isopentenyl diphosphate biosynthesis via DXP pathway; isopentenyl diphosphate from 1-deoxy-D-xylulose 5-phosphate: step 4/6. Functionally, involved in the biosynthesis of isopentenyl diphosphate (IPP) and dimethylallyl diphosphate (DMAPP), two major building blocks of isoprenoid compounds. Catalyzes the conversion of 4-diphosphocytidyl-2-C-methyl-D-erythritol 2-phosphate (CDP-ME2P) to 2-C-methyl-D-erythritol 2,4-cyclodiphosphate (ME-CPP) with a corresponding release of cytidine 5-monophosphate (CMP). In Bacillus thuringiensis subsp. konkukian (strain 97-27), this protein is 2-C-methyl-D-erythritol 2,4-cyclodiphosphate synthase.